The following is a 131-amino-acid chain: Large ribosomal subunit protein bL12 (131 aa).

This sequence belongs to the bacterial ribosomal protein bL12 family. As to quaternary structure, homodimer. Part of the ribosomal stalk of the 50S ribosomal subunit. Forms a multimeric L10(L12)X complex, where L10 forms an elongated spine to which 2 to 4 L12 dimers bind in a sequential fashion. Binds GTP-bound translation factors.

Its function is as follows. Forms part of the ribosomal stalk which helps the ribosome interact with GTP-bound translation factors. Is thus essential for accurate translation. In Parasynechococcus marenigrum (strain WH8102), this protein is Large ribosomal subunit protein bL12.